The sequence spans 297 residues: Acetaldehyde dehydrogenase (297 aa).

Cys-128 acts as the Acyl-thioester intermediate in catalysis. Residues 159–167 (SAGPGTRQN) and Asn-272 contribute to the NAD(+) site.

It belongs to the acetaldehyde dehydrogenase family.

It carries out the reaction acetaldehyde + NAD(+) + CoA = acetyl-CoA + NADH + H(+). The protein is Acetaldehyde dehydrogenase of Desulfitobacterium hafniense (strain DSM 10664 / DCB-2).